A 335-amino-acid polypeptide reads, in one-letter code: Matrix protein (335 aa).

The protein belongs to the morbillivirus/respirovirus/rubulavirus M protein family. Homodimer. Dimerization is critical for virion formation. Interacts with host ANP32B.

It localises to the virion. It is found in the host cell membrane. In terms of biological role, the M protein has a crucial role in virus assembly and interacts with the RNP complex as well as with the viral membrane. Associates with phosphatidylserine (PS) and phosphatidylinositol 4,5-bisphosphate (PIP2) at the plasma membrane. Interaction with PIP2 triggers matrix protein lattice polymerization. Matrix proteins induce host membrane deformation and curvature necessary for virion assembly/budding. This chain is Matrix protein (M), found in Homo sapiens (Human).